We begin with the raw amino-acid sequence, 234 residues long: uncharacterized protein (234 aa).

The tract at residues 1–23 (MVDQIRSPSWKSGFPSHQHQQGS) is disordered.

This is an uncharacterized protein from Caenorhabditis elegans.